Here is a 335-residue protein sequence, read N- to C-terminus: Protein-arginine N-acetylglucosaminyltransferase SseK3 (335 aa).

Residues 51–53 and Y75 each bind UDP-N-acetyl-alpha-D-glucosamine; that span reads QWF. Residues R153 and R184 are each glycosylated (N-beta-linked (GlcNAc) arginine; by autocatalysis). A UDP-N-acetyl-alpha-D-glucosamine-binding site is contributed by 224 to 227; sequence YLDA. The short motif at 226 to 228 is the DXD motif element; sequence DAD. A Mn(2+)-binding site is contributed by D228. The Proton acceptor role is filled by E258. R305 carries an N-beta-linked (GlcNAc) arginine; by autocatalysis glycan. Residues D325 and S327 each contribute to the Mn(2+) site. UDP-N-acetyl-alpha-D-glucosamine is bound by residues S327 and 332–335; that span reads SSWR. Residue R335 is glycosylated (N-beta-linked (GlcNAc) arginine; by autocatalysis).

Belongs to the glycosyltransferase NleB family. In terms of assembly, interacts with host TRIM32; without mediating its GlcNAcylation. Mn(2+) serves as cofactor. Post-translationally, auto-glycosylated: arginine GlcNAcylation is required for activity toward death domain-containing host target proteins.

The protein localises to the secreted. Its subcellular location is the host Golgi apparatus. It carries out the reaction L-arginyl-[protein] + UDP-N-acetyl-alpha-D-glucosamine = N(omega)-(N-acetyl-beta-D-glucosaminyl)-L-arginyl-[protein] + UDP + H(+). Functionally, protein-arginine N-acetylglucosaminyltransferase effector that disrupts TNF signaling in infected cells, including NF-kappa-B signaling and apoptosis. Acts by catalyzing the transfer of a single N-acetylglucosamine (GlcNAc) to a conserved arginine residue in the death domain of host proteins such as TRADD, TNFRSF1A/TNFR1 and TNFRSF10B/TRAILR2: arginine GlcNAcylation prevents homotypic/heterotypic death domain interactions and assembly of the oligomeric TNF-alpha receptor complex, thereby disrupting TNF signaling. Also acts on host proteins without a death domain: catalyzes arginine GlcNAcylation of host small Rab GTPase (Rab1, Rab5 and Rab11), thereby preventing GTPase activity and leading to impaired host vesicular protein transport. Also mediates auto-GlcNAcylation, which is required for activity toward death domain-containing host target proteins. The chain is Protein-arginine N-acetylglucosaminyltransferase SseK3 from Salmonella typhimurium (strain SL1344).